Consider the following 391-residue polypeptide: Multidrug resistance protein MdtL (391 aa).

Topologically, residues M1–R3 are cytoplasmic. Residues F4–V24 traverse the membrane as a helical segment. Residues G25–E37 lie on the Periplasmic side of the membrane. A helical membrane pass occupies residues A38–A58. The Cytoplasmic portion of the chain corresponds to G59–S75. A helical transmembrane segment spans residues A76 to A96. Topologically, residues G97–R98 are periplasmic. Residues F99–T119 traverse the membrane as a helical segment. Topologically, residues L120–S130 are cytoplasmic. The chain crosses the membrane as a helical span at residues L131–M151. The Periplasmic segment spans residues L152 to Q157. A helical transmembrane segment spans residues S158–L178. The Cytoplasmic segment spans residues K179–R202. The helical transmembrane segment at F203–V222 threads the bilayer. Residues N223–M244 lie on the Periplasmic side of the membrane. The helical transmembrane segment at A245–F265 threads the bilayer. The Cytoplasmic segment spans residues K266–R268. The chain crosses the membrane as a helical span at residues T269–P289. Residues S290–A292 lie on the Periplasmic side of the membrane. Residues V293 to M313 form a helical membrane-spanning segment. At S314–T330 the chain is on the cytoplasmic side. The helical transmembrane segment at L331–I351 threads the bilayer. Over G352 to N355 the chain is Periplasmic. Residues M356 to A376 traverse the membrane as a helical segment. The Cytoplasmic segment spans residues P377–A391.

This sequence belongs to the major facilitator superfamily. DHA1 family. MdtL (TC 2.A.1.2.22) subfamily.

The protein resides in the cell inner membrane. This Shigella flexneri serotype 5b (strain 8401) protein is Multidrug resistance protein MdtL.